The chain runs to 202 residues: MNSFRSFSMQCVQSTTTWDSTTIRRIPYYRDEPEYDTETKLEFIRLFFNSLTNQFSKRTFTRNENKQPFESEMVNQFNDSKLKLNYCLKLVRNNFLCETGKFQLSIKARKCIGYNEDSRLDAVIFQTSDFRRKVIFKEEVANYEFTPSLVNESIKIKNECEDLTLLLNERRLVLNQNPILLSQLIDLASIIKNEKHEYNAFK.

This is an uncharacterized protein from Dictyostelium discoideum (Social amoeba).